The following is a 103-amino-acid chain: Integration host factor subunit alpha (103 aa).

The protein belongs to the bacterial histone-like protein family. In terms of assembly, heterodimer of an alpha and a beta chain.

Its function is as follows. This protein is one of the two subunits of integration host factor, a specific DNA-binding protein that functions in genetic recombination as well as in transcriptional and translational control. The chain is Integration host factor subunit alpha from Aromatoleum aromaticum (strain DSM 19018 / LMG 30748 / EbN1) (Azoarcus sp. (strain EbN1)).